The chain runs to 193 residues: ATP-dependent Clp protease proteolytic subunit (193 aa).

Catalysis depends on Ser-98, which acts as the Nucleophile. The active site involves His-123.

It belongs to the peptidase S14 family. In terms of assembly, fourteen ClpP subunits assemble into 2 heptameric rings which stack back to back to give a disk-like structure with a central cavity, resembling the structure of eukaryotic proteasomes.

The protein resides in the cytoplasm. The catalysed reaction is Hydrolysis of proteins to small peptides in the presence of ATP and magnesium. alpha-casein is the usual test substrate. In the absence of ATP, only oligopeptides shorter than five residues are hydrolyzed (such as succinyl-Leu-Tyr-|-NHMec, and Leu-Tyr-Leu-|-Tyr-Trp, in which cleavage of the -Tyr-|-Leu- and -Tyr-|-Trp bonds also occurs).. Its function is as follows. Cleaves peptides in various proteins in a process that requires ATP hydrolysis. Has a chymotrypsin-like activity. Plays a major role in the degradation of misfolded proteins. ClpXP is involved in the complete degradation of the Site-2 clipped anti-sigma-W factor RsiW. This results in the release of SigW and the transcription activation of the genes under the control of the sigma-W factor. This chain is ATP-dependent Clp protease proteolytic subunit, found in Oceanobacillus iheyensis (strain DSM 14371 / CIP 107618 / JCM 11309 / KCTC 3954 / HTE831).